The following is a 195-amino-acid chain: Shikimate kinase (195 aa).

ATP is bound at residue 26–31 (GSGKST). Residue serine 30 participates in Mg(2+) binding. Positions 48, 72, and 94 each coordinate substrate. Residue arginine 132 participates in ATP binding. Residue arginine 151 coordinates substrate.

This sequence belongs to the shikimate kinase family. As to quaternary structure, monomer. Requires Mg(2+) as cofactor.

The protein resides in the cytoplasm. It catalyses the reaction shikimate + ATP = 3-phosphoshikimate + ADP + H(+). The protein operates within metabolic intermediate biosynthesis; chorismate biosynthesis; chorismate from D-erythrose 4-phosphate and phosphoenolpyruvate: step 5/7. In terms of biological role, catalyzes the specific phosphorylation of the 3-hydroxyl group of shikimic acid using ATP as a cosubstrate. This chain is Shikimate kinase, found in Synechococcus sp. (strain RCC307).